A 359-amino-acid polypeptide reads, in one-letter code: Serpentine receptor class epsilon-26 (359 aa).

Helical transmembrane passes span 29 to 49 (CAISSAELPFYMLSAYVVFVS), 66 to 86 (IGVPMFGSWFLLIAGKLITIL), 127 to 147 (VAGFLEIHFGFSVIFVGLAIV), 172 to 192 (FIIIYQFLAISISLGILFNIL), 195 to 215 (YVLNASWILCILIGTIMYYYI), 256 to 276 (LVFVVLATIVVMGFGIVALVL), and 282 to 302 (FFMHFGENTLFCYPLYIFLVV).

It belongs to the nematode receptor-like protein sre family.

The protein localises to the membrane. This Caenorhabditis elegans protein is Serpentine receptor class epsilon-26 (sre-26).